A 351-amino-acid polypeptide reads, in one-letter code: F-box protein At1g70590 (351 aa).

Positions 1–60 (MKQRTWPCRSEGSRFSSLSFLKPHDKDKRSRISSINKATAKSTTSSRSSSSSSSSRPPSN) are disordered. The segment covering 32–41 (ISSINKATAK) has biased composition (polar residues). The segment covering 42–59 (STTSSRSSSSSSSSRPPS) has biased composition (low complexity). Residues 62 to 111 (FGDFSMLPYDILMKIAAPFSHPNLQAASLVCKSWRDALKPLRESMLLIRW) form the F-box domain. A Sel1-like repeat occupies 105-141 (SMLLIRWGKKYKHGRGGVRANLDKALDSFLKGAMRGS). One copy of the TPR repeat lies at 142-175 (TLAMVDAGLVYWERGEKEKAVNLYRRASELGDAV).

The sequence is that of F-box protein At1g70590 from Arabidopsis thaliana (Mouse-ear cress).